Here is a 612-residue protein sequence, read N- to C-terminus: Calcium-dependent protein kinase 27 (612 aa).

A lipid anchor (N-myristoyl glycine) is attached at Gly2. Residues 23 to 132 (PRHAAPSSPS…AHIKRISSAG (110 aa)) form a disordered region. A compositionally biased stretch (low complexity) spans 28 to 50 (PSSPSQPTTTSRSIPVVLPSAPS). Residues 51–100 (SKPPPPTQTAPPVPVVISEPPPPQPQPEPQPAAPSQPPPPQEQPSPPPPA) are compositionally biased toward pro residues. Residues 117-127 (SRAKKPAHIKR) show a composition bias toward basic residues. One can recognise a Protein kinase domain in the interval 150-408 (YSLGRKLGQG…AHEVLCHPWL (259 aa)). Residues 156 to 164 (LGQGQFGTT) and Lys179 contribute to the ATP site. The active-site Proton acceptor is Asp274. An autoinhibitory domain region spans residues 414-444 (APDKPLDSAVLSRLRQFSAMNKLKKMALRVI). EF-hand domains follow at residues 451 to 486 (EEIA…VGAN), 487 to 522 (MKES…LNKV), 523 to 558 (ERED…FGIE), and 561 to 592 (RLED…TTTG). Positions 464, 466, 468, 470, 475, 500, 502, 504, 506, 511, 536, 538, 540, 542, 547, 570, 572, 574, 576, and 581 each coordinate Ca(2+).

It belongs to the protein kinase superfamily. Ser/Thr protein kinase family. CDPK subfamily.

The protein localises to the membrane. The catalysed reaction is L-seryl-[protein] + ATP = O-phospho-L-seryl-[protein] + ADP + H(+). The enzyme catalyses L-threonyl-[protein] + ATP = O-phospho-L-threonyl-[protein] + ADP + H(+). With respect to regulation, activated by calcium. Autophosphorylation may play an important role in the regulation of the kinase activity. May play a role in signal transduction pathways that involve calcium as a second messenger. In Oryza sativa subsp. japonica (Rice), this protein is Calcium-dependent protein kinase 27.